Consider the following 220-residue polypeptide: Kinetochore protein Spc25 (220 aa).

The stretch at 41 to 119 forms a coiled coil; it reads ILLDVKEAAA…NEIMERIHTL (79 aa).

This sequence belongs to the SPC25 family. In terms of assembly, component of the Ndc80 complex, which is composed of Ndc80, Nuf2 and Spc25.

Its subcellular location is the nucleus. The protein resides in the chromosome. It is found in the centromere. It localises to the kinetochore. Functionally, acts as a component of the essential kinetochore-associated Ndc80 complex, which is required for chromosome segregation and spindle checkpoint activity during meiosis and mitosis. Required for kinetochore integrity and the organization of stable microtubule binding sites in the outer plate of the kinetochore. Participates in SAC signaling that responds specifically to disruptions in spindle microtubule dynamics. The NDC80 complex synergistically enhances the affinity of the SKA1 complex for microtubules and may allow the NDC80 complex to track depolymerizing microtubules. The protein is Kinetochore protein Spc25 of Drosophila erecta (Fruit fly).